The sequence spans 913 residues: Eukaryotic translation initiation factor 3 subunit C (913 aa).

The segment at 1–44 is disordered; it reads MSRFFTTGSDSESESSLSGEELVTKPVGGNYGKQPLLLSEDEED. Low complexity predominate over residues 8–21; the sequence is GSDSESESSLSGEE. Residues serine 9, serine 11, serine 13, serine 15, serine 16, serine 18, and serine 39 each carry the phosphoserine modification. Lysine 99 is modified (N6-acetyllysine). 2 disordered regions span residues 157 to 301 and 522 to 542; these read TSYK…GGEW and QLTP…NEGE. Phosphoserine is present on residues serine 166, serine 178, serine 181, and serine 182. The span at 166 to 190 shows a compositional bias: acidic residues; sequence SADEDAEKNEEDSEGSSDEDEDEDG. Basic and acidic residues predominate over residues 199-216; that stretch reads KKSEAPSGESRKFLKKMD. The span at 217–232 shows a compositional bias: acidic residues; the sequence is DEDEDSEDSEDDEDWD. Basic and acidic residues predominate over residues 261 to 278; sequence PTTDEDKKAAEKKREDKA. The span at 522 to 531 shows a compositional bias: polar residues; the sequence is QLTPPEGSSK. Residue threonine 524 is modified to Phosphothreonine. Position 643 is an N6-acetyllysine (lysine 643). Residues 673–849 enclose the PCI domain; the sequence is FHLHINLELL…QTVVMHRTEP (177 aa). Positions 885-913 are disordered; the sequence is FRDQKDGYRKNEGYMRRGGYRQQQSQTAY. A compositionally biased stretch (basic and acidic residues) spans 886 to 899; that stretch reads RDQKDGYRKNEGYM. Serine 909 is modified (phosphoserine).

The protein belongs to the eIF-3 subunit C family. As to quaternary structure, component of the eukaryotic translation initiation factor 3 (eIF-3) complex, which is composed of 13 subunits: EIF3A, EIF3B, EIF3C, EIF3D, EIF3E, EIF3F, EIF3G, EIF3H, EIF3I, EIF3J, EIF3K, EIF3L and EIF3M. The eIF-3 complex appears to include 3 stable modules: module A is composed of EIF3A, EIF3B, EIF3G and EIF3I; module B is composed of EIF3F, EIF3H, and EIF3M; and module C is composed of EIF3C, EIF3D, EIF3E, EIF3K and EIF3L. EIF3C of module C binds EIF3B of module A and EIF3H of module B, thereby linking the three modules. EIF3J is a labile subunit that binds to the eIF-3 complex via EIF3B. The eIF-3 complex interacts with RPS6KB1 under conditions of nutrient depletion. Mitogenic stimulation leads to binding and activation of a complex composed of MTOR and RPTOR, leading to phosphorylation and release of RPS6KB1 and binding of EIF4B to eIF-3. Interacts with ALKBH4, IFIT1 and IFIT2. Interacts with BZW2/5MP1. In terms of processing, phosphorylated. Phosphorylation is enhanced upon serum stimulation.

Its subcellular location is the cytoplasm. Component of the eukaryotic translation initiation factor 3 (eIF-3) complex, which is required for several steps in the initiation of protein synthesis. The eIF-3 complex associates with the 40S ribosome and facilitates the recruitment of eIF-1, eIF-1A, eIF-2:GTP:methionyl-tRNAi and eIF-5 to form the 43S pre-initiation complex (43S PIC). The eIF-3 complex stimulates mRNA recruitment to the 43S PIC and scanning of the mRNA for AUG recognition. The eIF-3 complex is also required for disassembly and recycling of post-termination ribosomal complexes and subsequently prevents premature joining of the 40S and 60S ribosomal subunits prior to initiation. The eIF-3 complex specifically targets and initiates translation of a subset of mRNAs involved in cell proliferation, including cell cycling, differentiation and apoptosis, and uses different modes of RNA stem-loop binding to exert either translational activation or repression. In Pongo abelii (Sumatran orangutan), this protein is Eukaryotic translation initiation factor 3 subunit C.